The primary structure comprises 302 residues: MGNCCWTQCFGLLRKEAGRLQRVGGGGGSKYFRTCSRGEHLTIEFENLVESDEGESPGSSHRPLTEEEIVDLRERHYDSIAEKQKDLDKKIQKELALQEEKLRLEEEALYAAQREAARAAKQRKLLEQERQRIVQQYHPSNNGEYQSSGPEDDFESCLRNMKSQYEVFRSSRLSSDATVLTPNTESSCDLMTKTKSTSGNDDSTSLDLEWEDEEGMNRMLPMRERSKTEEDILRAALKYSNKKTGSNPTSASDDSNGLEWENDFVSAEMDDNGNSEYSGFVNPVLELSDSGIRHSDTDQQTR.

A Phosphoserine modification is found at serine 29. Residues 78–138 (DSIAEKQKDL…ERQRIVQQYH (61 aa)) form an interaction with AP1G1 region. Residues 80-138 (IAEKQKDLDKKIQKELALQEEKLRLEEEALYAAQREAARAAKQRKLLEQERQRIVQQYH) are a coiled coil. Over residues 188–206 (CDLMTKTKSTSGNDDSTSL) the composition is skewed to polar residues. Residues 188–258 (CDLMTKTKST…TSASDDSNGL (71 aa)) form a disordered region. Positions 199 to 215 (GNDDSTSLDLEWEDEEG) are sufficient for association with the Arp2/3 complex. The span at 221–233 (PMRERSKTEEDIL) shows a compositional bias: basic and acidic residues. Serine 226 bears the Phosphoserine mark. Residue threonine 228 is modified to Phosphothreonine. Over residues 242–255 (KKTGSNPTSASDDS) the composition is skewed to polar residues.

In terms of assembly, interacts (via coiled-coil domain) with AP1G1 (via GAE domain). Interacts with KIF5B. Associates with the Arp2/3 complex. In terms of processing, palmitoylated.

It localises to the golgi apparatus. The protein resides in the trans-Golgi network. It is found in the late endosome. Its subcellular location is the early endosome. Functionally, necessary for adaptor protein complex 1 (AP-1)-dependent transport between the trans-Golgi network and endosomes. Regulates the membrane association of AP1G1/gamma1-adaptin, one of the subunits of the AP-1 adaptor complex. The direct interaction with AP1G1/gamma1-adaptin attenuates the release of the AP-1 complex from membranes. Regulates endosomal membrane traffic via association with AP-1 and KIF5B thus linking kinesin-based plus-end-directed microtubular transport to AP-1-dependent membrane traffic. May act as effector of AP-1 in calcium-induced endo-lysosome secretion. Inhibits Arp2/3 complex function; negatively regulates cell spreading, size and motility via intracellular sequestration of the Arp2/3 complex. The protein is AP-1 complex-associated regulatory protein (AP1AR) of Homo sapiens (Human).